We begin with the raw amino-acid sequence, 361 residues long: Peptide chain release factor 1 (361 aa).

Gln236 bears the N5-methylglutamine mark. Basic and acidic residues predominate over residues Asn285–Arg309. The tract at residues Asn285 to Asn312 is disordered.

The protein belongs to the prokaryotic/mitochondrial release factor family. In terms of processing, methylated by PrmC. Methylation increases the termination efficiency of RF1.

The protein resides in the cytoplasm. Its function is as follows. Peptide chain release factor 1 directs the termination of translation in response to the peptide chain termination codons UAG and UAA. This chain is Peptide chain release factor 1, found in Methylobacterium radiotolerans (strain ATCC 27329 / DSM 1819 / JCM 2831 / NBRC 15690 / NCIMB 10815 / 0-1).